The primary structure comprises 316 residues: Putative mannose-6-phosphate isomerase YvyI (316 aa).

H98, E116, and H173 together coordinate Zn(2+). Residue R193 is part of the active site.

It belongs to the mannose-6-phosphate isomerase type 1 family. It depends on Zn(2+) as a cofactor.

The catalysed reaction is D-mannose 6-phosphate = D-fructose 6-phosphate. The chain is Putative mannose-6-phosphate isomerase YvyI (yvyI) from Bacillus subtilis (strain 168).